Consider the following 127-residue polypeptide: Major sperm protein 19/31/40/45/50/51/53/59/61/65/81/113/142 (127 aa).

Position 2 is an N-acetylalanine (Ala-2). Positions 9-126 (DIQTQPGTKI…RRKNLPIEYN (118 aa)) constitute an MSP domain.

In terms of assembly, helical subfilaments are built from MSP dimers; filaments are formed from two subfilaments coiling round one another; and filaments themselves supercoil to produce bundles. Sperm.

It is found in the cell projection. It localises to the pseudopodium. The protein resides in the cytoplasm. Its subcellular location is the cytoskeleton. Functionally, central component in molecular interactions underlying sperm crawling. Forms an extensive filament system that extends from sperm villipoda, along the leading edge of the pseudopod. The polypeptide is Major sperm protein 19/31/40/45/50/51/53/59/61/65/81/113/142 (msp-19) (Caenorhabditis elegans).